A 434-amino-acid chain; its full sequence is Histidinol dehydrogenase (434 aa).

NAD(+) contacts are provided by Tyr130, Gln188, and Asn211. Residues Ser237, Gln259, and His262 each coordinate substrate. Zn(2+) is bound by residues Gln259 and His262. Active-site proton acceptor residues include Glu326 and His327. Residues His327, Asp360, Glu414, and His419 each contribute to the substrate site. Asp360 lines the Zn(2+) pocket. Position 419 (His419) interacts with Zn(2+).

This sequence belongs to the histidinol dehydrogenase family. In terms of assembly, homodimer. Requires Zn(2+) as cofactor.

The enzyme catalyses L-histidinol + 2 NAD(+) + H2O = L-histidine + 2 NADH + 3 H(+). It participates in amino-acid biosynthesis; L-histidine biosynthesis; L-histidine from 5-phospho-alpha-D-ribose 1-diphosphate: step 9/9. Its function is as follows. Catalyzes the sequential NAD-dependent oxidations of L-histidinol to L-histidinaldehyde and then to L-histidine. This is Histidinol dehydrogenase from Escherichia coli (strain K12).